The following is a 211-amino-acid chain: Somatotropin (211 aa).

Residues 1 to 23 (MASGFLLCPVLLAVFFMSPVEVG) form the signal peptide. Zn(2+) is bound at residue His-40. A disulfide bridge connects residues Cys-73 and Cys-184. Residue Glu-193 coordinates Zn(2+). Cys-201 and Cys-209 form a disulfide bridge.

Belongs to the somatotropin/prolactin family.

The protein localises to the secreted. Functionally, growth hormone plays an important role in growth control and is involved in the regulation of several anabolic processes. Implicated as an osmoregulatory substance important for seawater adaptation. The polypeptide is Somatotropin (gh) (Lepisosteus osseus (Long-nosed gar)).